An 865-amino-acid chain; its full sequence is MQNGANSRSQEYQGVSVDSRYDPQAIETKWQQSWAAAQLDRTPEADDRPKFYALSMFPYPSGNLHMGHVRNYTITDAIARVKRRQGFRVLHAMGWDAFGLPAENAAIDRGVQPADWTYQNVAQMREQLKQLGLSYDWDREVTTCSPDYYRWTQWLFLQFFEAGLAYQKEATVNWDPIDQTVLANEQVDSEGRSWRSGAKVERRQLKQWFLKITDYAEELLQDLDQLTGWPERVRLMQANWIGKSTGAYLEFPIVNSSDRVKVFTTRPDTVYGVSYVVLAPEHPLVTQVTTPEQQTAVAAFAAEVSQTSELERTAEDRPKRGVPTGGFVTNPFTGQAVPIWIADYVLVEYGTGAVMGVPAHDSRDFAFAQRYGLPVQPVIQPTEGAIAEPWPAPFTEAGVMVNSGQFDGLSSTEAKAKIIAFAEEQGWGQAHVQYRLRDWLISRQRYWGCPIPIVHCPDCGPVAAADLPVQLPDSVQFSGRGPSPLAQLEDWVTTTCPSCGKPARRETDTMDTFMCSSWYYLRYSDASNPEIAFTKDKVNDWLPVDQYVGGIEHAILHLLYSRFFTKVLRDRGLLSFDEPFKRLLTQGMVQGLTYKNPKTGKYVPSDRISDPSQPVDPDTGDRLEVFFEKMSKSKYNGVDPARVLDRYGADTARMFILFKAPPEKDLEWDDADVEGQFRFLNRVWRLVQTASQVEATTAADDKAEKDLRRAVHTAIQAFTEDLEEDYQLNTAIAELMKLTNALNDAPMPGSPAYLKGVQTLVLLLAPFAPHIAEELWQQLGGERSVHLEGWPVLDESALIVDEIPLVIQIMGKTRGTITVPASADRDQLQQLAKNSEIAQRWLDGQTIRKVIVVPGKLVNFVIASP.

The 'HIGH' region signature appears at 58-68 (PYPSGNLHMGH). Residues 629–633 (KMSKS) carry the 'KMSKS' region motif. Lysine 632 contributes to the ATP binding site.

The protein belongs to the class-I aminoacyl-tRNA synthetase family.

Its subcellular location is the cytoplasm. The catalysed reaction is tRNA(Leu) + L-leucine + ATP = L-leucyl-tRNA(Leu) + AMP + diphosphate. The sequence is that of Leucine--tRNA ligase from Synechococcus sp. (strain ATCC 27144 / PCC 6301 / SAUG 1402/1) (Anacystis nidulans).